The primary structure comprises 156 residues: Small ribosomal subunit protein uS7 (156 aa).

It belongs to the universal ribosomal protein uS7 family. Part of the 30S ribosomal subunit. Contacts proteins S9 and S11.

In terms of biological role, one of the primary rRNA binding proteins, it binds directly to 16S rRNA where it nucleates assembly of the head domain of the 30S subunit. Is located at the subunit interface close to the decoding center, probably blocks exit of the E-site tRNA. The polypeptide is Small ribosomal subunit protein uS7 (Rhodopseudomonas palustris (strain BisB5)).